Consider the following 192-residue polypeptide: Signal peptidase complex catalytic subunit SEC11C (192 aa).

Topologically, residues 1–28 (MVRAGAVGTHLPTSSLDIFGDLRKMNKR) are cytoplasmic. Residues 29-48 (QLYYQVLNFAMIVSSALMIW) form a helical; Signal-anchor for type II membrane protein membrane-spanning segment. At 49 to 192 (KGLIVLTGSE…GAYVLLKRES (144 aa)) the chain is on the lumenal side. Active-site charge relay system residues include Ser68, His108, and Asp134. Positions 177-188 (ALVAVMGAYVLL) are C-terminal short (CTS) helix.

This sequence belongs to the peptidase S26B family. In terms of assembly, component of the signal peptidase complex paralog C (SPC-C) composed of a catalytic subunit SEC11C and three accessory subunits SPCS1, SPCS2 and SPCS3. Within the complex, interacts with SPCS2 and SPCS3. The complex induces a local thinning of the ER membrane which is used to measure the length of the signal peptide (SP) h-region of protein substrates. This ensures the selectivity of the complex towards h-regions shorter than 18-20 amino acids. Post-translationally, may undergo processing at the N-terminus.

The protein localises to the endoplasmic reticulum membrane. The enzyme catalyses Cleavage of hydrophobic, N-terminal signal or leader sequences from secreted and periplasmic proteins.. In terms of biological role, catalytic component of the signal peptidase complex (SPC) which catalyzes the cleavage of N-terminal signal sequences from nascent proteins as they are translocated into the lumen of the endoplasmic reticulum. Specifically cleaves N-terminal signal peptides that contain a hydrophobic alpha-helix (h-region) shorter than 18-20 amino acids. The polypeptide is Signal peptidase complex catalytic subunit SEC11C (Sec11c) (Rattus norvegicus (Rat)).